The primary structure comprises 525 residues: MTLPKLSSVSVSSGHVSANSHGFSILSKHPHPNNLVHSHSLSHTNAKSHLPISSTSTKENSTNKEEAESLKKNNPSSWDPSDDIKLRHLKEIKNLGWKEIAHHFPNRTPNACQFRWRRLKSGNLKSNKTAVIDINKLFGVYATGDATPSAGTPSAEEAVKEEAVEDEDITAGSSAIEDSPPDFKPLVKPKYMDRKLITQRSTSTFSDHEPQHTKPRKLFVKPRSFSHSITTNTPNVKTAQQTNLSLYNTTSAKTNKAVNSNDYENIGLVPKIIIRSRRNSFIPSTQIPHSTTKTRKNSHSVISSRRSSFNMMHSRRSSFNSHAPTEPISRRASLVVSPYMSPRRLSTSQSVHYHPQHQYYLNPIASPNCKTDHANDKITHTRTFLDMQKFANKHPWSREDDEVLLNNTKDKQNHLSPLEISIVLPNNRSELEIQQRMDYLKRKGRVSGFHTNEGCKDEEEEDDIDPLHKENGINTPSQQSQNYGMLEAKHDNPKSSELSSMTSANDIRNEQDELPGINSIFKNIF.

Residues 22–82 form a disordered region; the sequence is GFSILSKHPH…NNPSSWDPSD (61 aa). Over residues 35–47 the composition is skewed to polar residues; that stretch reads LVHSHSLSHTNAK. Residues 61–71 show a composition bias toward basic and acidic residues; the sequence is STNKEEAESLK. One can recognise an HTH myb-type domain in the interval 67–124; that stretch reads AESLKKNNPSSWDPSDDIKLRHLKEIKNLGWKEIAHHFPNRTPNACQFRWRRLKSGNL. The H-T-H motif DNA-binding region spans 97 to 120; the sequence is WKEIAHHFPNRTPNACQFRWRRLK. S280 bears the Phosphoserine mark. Residues 283–308 are disordered; sequence PSTQIPHSTTKTRKNSHSVISSRRSS. The segment covering 299-308 has biased composition (low complexity); it reads HSVISSRRSS. Residues S333, S341, and S366 each carry the phosphoserine modification. The segment at 451 to 510 is disordered; that stretch reads TNEGCKDEEEEDDIDPLHKENGINTPSQQSQNYGMLEAKHDNPKSSELSSMTSANDIRNE. Composition is skewed to polar residues over residues 472 to 483 and 495 to 506; these read GINTPSQQSQNY and SSELSSMTSAND.

Belongs to the DOT6 family. As to quaternary structure, component of the RPD3C(L) complex composed of at least ASH1, CTI6, DEP1, DOT6, PHO23, RPD3, RXT2, RXT3, SAP30, SDS3, SIN3, TOD6; UME1 and UME6.

The protein resides in the cytoplasm. Its subcellular location is the nucleus. In terms of biological role, component of the RPD3 histone deacetylase complex RPD3C(L) responsible for the deacetylation of lysine residues on the N-terminal part of the core histones (H2A, H2B, H3 and H4). Histone deacetylation gives a tag for epigenetic repression and plays an important role in transcriptional regulation, cell cycle progression and developmental events. TOD6 binds to sequences containing the core CGATG, which resembles the PAC (Polymerase A and C) motif. In Saccharomyces cerevisiae (strain ATCC 204508 / S288c) (Baker's yeast), this protein is Transcriptional regulatory protein TOD6 (TOD6).